Here is a 284-residue protein sequence, read N- to C-terminus: 2-dehydro-3-deoxyphosphooctonate aldolase (284 aa).

This sequence belongs to the KdsA family.

It localises to the cytoplasm. The catalysed reaction is D-arabinose 5-phosphate + phosphoenolpyruvate + H2O = 3-deoxy-alpha-D-manno-2-octulosonate-8-phosphate + phosphate. Its pathway is carbohydrate biosynthesis; 3-deoxy-D-manno-octulosonate biosynthesis; 3-deoxy-D-manno-octulosonate from D-ribulose 5-phosphate: step 2/3. It functions in the pathway bacterial outer membrane biogenesis; lipopolysaccharide biosynthesis. This Actinobacillus pleuropneumoniae serotype 7 (strain AP76) protein is 2-dehydro-3-deoxyphosphooctonate aldolase.